We begin with the raw amino-acid sequence, 355 residues long: UDP-N-acetylglucosamine--N-acetylmuramyl-(pentapeptide) pyrophosphoryl-undecaprenol N-acetylglucosamine transferase (355 aa).

UDP-N-acetyl-alpha-D-glucosamine-binding positions include 15 to 17 (TGG), Asn-127, Arg-163, Ser-191, Ile-244, 263 to 268 (ALTVSE), and Gln-288.

It belongs to the glycosyltransferase 28 family. MurG subfamily.

The protein localises to the cell inner membrane. The enzyme catalyses di-trans,octa-cis-undecaprenyl diphospho-N-acetyl-alpha-D-muramoyl-L-alanyl-D-glutamyl-meso-2,6-diaminopimeloyl-D-alanyl-D-alanine + UDP-N-acetyl-alpha-D-glucosamine = di-trans,octa-cis-undecaprenyl diphospho-[N-acetyl-alpha-D-glucosaminyl-(1-&gt;4)]-N-acetyl-alpha-D-muramoyl-L-alanyl-D-glutamyl-meso-2,6-diaminopimeloyl-D-alanyl-D-alanine + UDP + H(+). It functions in the pathway cell wall biogenesis; peptidoglycan biosynthesis. In terms of biological role, cell wall formation. Catalyzes the transfer of a GlcNAc subunit on undecaprenyl-pyrophosphoryl-MurNAc-pentapeptide (lipid intermediate I) to form undecaprenyl-pyrophosphoryl-MurNAc-(pentapeptide)GlcNAc (lipid intermediate II). This is UDP-N-acetylglucosamine--N-acetylmuramyl-(pentapeptide) pyrophosphoryl-undecaprenol N-acetylglucosamine transferase from Salmonella paratyphi A (strain ATCC 9150 / SARB42).